Consider the following 210-residue polypeptide: Glutathione S-transferase P (210 aa).

One can recognise a GST N-terminal domain in the interval 2–81 (PPYTVVYFPV…HLGRTLGLYG (80 aa)). Residue Tyr4 is modified to Phosphotyrosine; by EGFR. Residues Tyr8, Arg14, Trp39, Lys45, and 52 to 53 (QL) each bind glutathione. The residue at position 62 (Thr62) is a Phosphothreonine. 65 to 66 (QS) contacts glutathione. The region spanning 83-204 (DQREAALVDM…ASPEHVNLPI (122 aa)) is the GST C-terminal domain. N6-succinyllysine is present on residues Lys103 and Lys116. An N6-acetyllysine modification is found at Lys128.

The protein belongs to the GST superfamily. Pi family. As to quaternary structure, homodimer. Interacts with CDK5.

The protein localises to the cytoplasm. The protein resides in the mitochondrion. It is found in the nucleus. The catalysed reaction is RX + glutathione = an S-substituted glutathione + a halide anion + H(+). It catalyses the reaction prostaglandin J2 + glutathione = prostaglandin J2-S-(R)-glutathione. It carries out the reaction prostaglandin J2 + glutathione = prostaglandin J2-S-(S)-glutathione. The enzyme catalyses prostaglandin A2 + glutathione = prostaglandin A2-S-(S)-glutathione. The catalysed reaction is 11(S)-hydroxy-14(S),15(S)-epoxy-(5Z,8Z,12E)-eicosatrienoate + glutathione = (11S,15S)-dihydroxy-14(R)-S-glutathionyl-(5Z,8Z,12E)-eicosatrienoate. Conjugation of reduced glutathione to a wide number of exogenous and endogenous hydrophobic electrophiles. Involved in the formation of glutathione conjugates of both prostaglandin A2 (PGA2) and prostaglandin J2 (PGJ2). Participates in the formation of novel hepoxilin regioisomers. Negatively regulates CDK5 activity via p25/p35 translocation to prevent neurodegeneration. This Pongo abelii (Sumatran orangutan) protein is Glutathione S-transferase P (GSTP1).